A 205-amino-acid chain; its full sequence is Transcription termination/antitermination protein NusG (205 aa).

The 25-residue stretch at Gly154–Arg178 folds into the KOW domain.

It belongs to the NusG family.

Participates in transcription elongation, termination and antitermination. The chain is Transcription termination/antitermination protein NusG from Synechocystis sp. (strain ATCC 27184 / PCC 6803 / Kazusa).